We begin with the raw amino-acid sequence, 438 residues long: GTPase Der (438 aa).

EngA-type G domains are found at residues 4 to 168 (PLVT…KSEG) and 177 to 352 (IKIA…DNYS). GTP contacts are provided by residues 10 to 17 (GRPNVGKS), 57 to 61 (DTGGI), 120 to 123 (NKID), 183 to 190 (GKPNVGKS), 230 to 234 (DTAGL), and 295 to 298 (NKWD). The 85-residue stretch at 353–437 (KRIATGVLND…GIKMIFKERK (85 aa)) folds into the KH-like domain.

It belongs to the TRAFAC class TrmE-Era-EngA-EngB-Septin-like GTPase superfamily. EngA (Der) GTPase family. Associates with the 50S ribosomal subunit.

Its function is as follows. GTPase that plays an essential role in the late steps of ribosome biogenesis. This chain is GTPase Der, found in Clostridium acetobutylicum (strain ATCC 824 / DSM 792 / JCM 1419 / IAM 19013 / LMG 5710 / NBRC 13948 / NRRL B-527 / VKM B-1787 / 2291 / W).